An 80-amino-acid chain; its full sequence is DinI-like protein Z2083/ECs2153 (80 aa).

This is DinI-like protein Z2083/ECs2153 from Escherichia coli O157:H7.